Reading from the N-terminus, the 430-residue chain is Long-chain specific acyl-CoA dehydrogenase, mitochondrial (430 aa).

The N-terminal 30 residues, 1 to 30 (MAARLLRGSLRFLGGHCAARPLPALRCSHS), are a transit peptide targeting the mitochondrion. K42 bears the N6-acetyllysine mark. Phosphoserine occurs at positions 54 and 55. An N6-acetyllysine; alternate mark is found at K66 and K81. K66 and K81 each carry N6-succinyllysine; alternate. N6-acetyllysine is present on residues K92 and K95. Residue K165 is modified to N6-succinyllysine. FAD is bound by residues 170 to 179 (IAMTELGAGS) and 203 to 205 (FIS). S179 serves as a coordination point for substrate. 227–228 (AR) is a substrate binding site. K240 carries the N6-succinyllysine modification. 2 positions are modified to N6-acetyllysine; alternate: K254 and K279. An N6-succinyllysine; alternate mark is found at K254 and K279. Substrate-binding positions include Y282 and 289–292 (PQER). Catalysis depends on E291, which acts as the Proton acceptor. R317 lines the FAD pocket. K318 is modified (N6-acetyllysine). At K322 the chain carries N6-acetyllysine; alternate. At K322 the chain carries N6-succinyllysine; alternate. Q328 lines the FAD pocket. The residue at position 358 (K358) is an N6-acetyllysine. Phosphoserine is present on S362. 385–389 (QLHGG) is an FAD binding site. A substrate-binding site is contributed by 412 to 413 (GG). 414 to 416 (TNE) serves as a coordination point for FAD.

Belongs to the acyl-CoA dehydrogenase family. Homotetramer. Requires FAD as cofactor. Acetylation at Lys-318 and Lys-322 in proximity of the cofactor-binding sites strongly reduces catalytic activity. These sites are deacetylated by SIRT3.

The protein resides in the mitochondrion matrix. The enzyme catalyses a long-chain 2,3-saturated fatty acyl-CoA + oxidized [electron-transfer flavoprotein] + H(+) = a long-chain (2E)-enoyl-CoA + reduced [electron-transfer flavoprotein]. It catalyses the reaction hexanoyl-CoA + oxidized [electron-transfer flavoprotein] + H(+) = (2E)-hexenoyl-CoA + reduced [electron-transfer flavoprotein]. It carries out the reaction octanoyl-CoA + oxidized [electron-transfer flavoprotein] + H(+) = (2E)-octenoyl-CoA + reduced [electron-transfer flavoprotein]. The catalysed reaction is decanoyl-CoA + oxidized [electron-transfer flavoprotein] + H(+) = (2E)-decenoyl-CoA + reduced [electron-transfer flavoprotein]. The enzyme catalyses dodecanoyl-CoA + oxidized [electron-transfer flavoprotein] + H(+) = (2E)-dodecenoyl-CoA + reduced [electron-transfer flavoprotein]. It catalyses the reaction tetradecanoyl-CoA + oxidized [electron-transfer flavoprotein] + H(+) = (2E)-tetradecenoyl-CoA + reduced [electron-transfer flavoprotein]. It carries out the reaction oxidized [electron-transfer flavoprotein] + hexadecanoyl-CoA + H(+) = (2E)-hexadecenoyl-CoA + reduced [electron-transfer flavoprotein]. The catalysed reaction is octadecanoyl-CoA + oxidized [electron-transfer flavoprotein] + H(+) = (2E)-octadecenoyl-CoA + reduced [electron-transfer flavoprotein]. The enzyme catalyses eicosanoyl-CoA + oxidized [electron-transfer flavoprotein] + H(+) = (2E)-eicosenoyl-CoA + reduced [electron-transfer flavoprotein]. It catalyses the reaction docosanoyl-CoA + oxidized [electron-transfer flavoprotein] + H(+) = (2E)-docosenoyl-CoA + reduced [electron-transfer flavoprotein]. It carries out the reaction tetracosanoyl-CoA + oxidized [electron-transfer flavoprotein] + H(+) = (2E)-tetracosenoyl-CoA + reduced [electron-transfer flavoprotein]. The catalysed reaction is (5E)-tetradecenoyl-CoA + oxidized [electron-transfer flavoprotein] + H(+) = (2E,5E)-tetradecadienoyl-CoA + reduced [electron-transfer flavoprotein]. The enzyme catalyses (5Z)-tetradecenoyl-CoA + oxidized [electron-transfer flavoprotein] + H(+) = (2E,5Z)-tetradecadienoyl-CoA + reduced [electron-transfer flavoprotein]. It catalyses the reaction oxidized [electron-transfer flavoprotein] + (9Z)-octadecenoyl-CoA + H(+) = (2E,9Z)-octadecadienoyl-CoA + reduced [electron-transfer flavoprotein]. The protein operates within lipid metabolism; mitochondrial fatty acid beta-oxidation. Long-chain specific acyl-CoA dehydrogenase is one of the acyl-CoA dehydrogenases that catalyze the first step of mitochondrial fatty acid beta-oxidation, an aerobic process breaking down fatty acids into acetyl-CoA and allowing the production of energy from fats. The first step of fatty acid beta-oxidation consists in the removal of one hydrogen from C-2 and C-3 of the straight-chain fatty acyl-CoA thioester, resulting in the formation of trans-2-enoyl-CoA. Among the different mitochondrial acyl-CoA dehydrogenases, long-chain specific acyl-CoA dehydrogenase can act on saturated and unsaturated acyl-CoAs with 6 to 24 carbons with a preference for 8 to 18 carbons long primary chains. The polypeptide is Long-chain specific acyl-CoA dehydrogenase, mitochondrial (Macaca fascicularis (Crab-eating macaque)).